Reading from the N-terminus, the 430-residue chain is Type 3 secretion system ATPase (430 aa).

162-167 (GCGKTF) is an ATP binding site.

This sequence belongs to the ATPase alpha/beta chains family. T3SS ATPase subfamily. In terms of assembly, the core secretion machinery of the T3SS is composed of approximately 20 different proteins, including cytoplasmic components, a base, an export apparatus and a needle. This subunit is part of the cytosolic complex. Forms homohexamers. Interacts directly with MxiN/SctL (stator protein) and Spa13/SctO (stalk protein). Can form a soluble complex with Spa33/SctQ, MxiN/SctL and MxiK/SctK.

The protein localises to the cytoplasm. The catalysed reaction is ATP + H2O + cellular proteinSide 1 = ADP + phosphate + cellular proteinSide 2.. Its activity is regulated as follows. Oligomerization increases ATPase activity. Monomeric forms exhibit low-level ATPase activity by forming short-lived oligomers with active site contributions from at least two protomers. In contrast, oligomers exhibit enhanced ATP hydrolysis rates that likely result from multiple preformed active sites within the oligomeric complex. Oligomerization is important for both enzyme activation and T3SS function. Activity is regulated by MxiN/SctL, which differentially regulates the activity of the monomer and the oligomer: it up-regulates the ATPase activity of the monomer, while it down-regulates the activity of the oligomer. Its function is as follows. ATPase component of the type III secretion system (T3SS), also called injectisome, which is used to inject bacterial effector proteins into eukaryotic host cells. Acts as a molecular motor to provide the energy that is required for the export of proteins. Required for type III secretion apparatus (T3SA) formation, proper protein secretion, host cell invasion and virulence. May play a critical role in T3SS substrate recognition, disassembly of the effector/chaperone complex and unfolding of the effector in an ATP-dependent manner prior to secretion. The protein is Type 3 secretion system ATPase of Shigella flexneri.